The chain runs to 408 residues: GPI transamidase component GAB1 homolog (408 aa).

10 helical membrane-spanning segments follow: residues 9–29 (LLGL…TWIA), 66–86 (VFYQ…LGGI), 88–108 (VTRF…YLIA), 125–145 (PLWI…GIAC), 149–169 (MILN…SYAI), 207–227 (IFVV…FFLN), 266–286 (FFLF…SIRL), 303–323 (LFKA…LPIF), 339–359 (AIVF…TLGC), and 370–390 (LILA…LLLV). The interval 247 to 267 (PNLGLWWYFFTEMFNEFRTFF) is may be involved in recognition of long-chain fatty acids in GPI.

This sequence belongs to the PIGU family. In terms of assembly, forms a complex with PIG-S homolog, PIG-T homolog and GPI8.

The protein localises to the endoplasmic reticulum membrane. The protein operates within glycolipid biosynthesis; glycosylphosphatidylinositol-anchor biosynthesis. Functionally, component of the GPI transamidase complex. May be involved in the recognition of either the GPI attachment signal or the lipid portion of GPI. This Schizosaccharomyces pombe (strain 972 / ATCC 24843) (Fission yeast) protein is GPI transamidase component GAB1 homolog.